Reading from the N-terminus, the 394-residue chain is Phosphoglycerate kinase (394 aa).

Residues 21–23, R36, 59–62, R118, and R151 contribute to the substrate site; these read DFN and HLGR. S183 carries the post-translational modification Phosphoserine. K201 contacts ATP. T299 is modified (phosphothreonine). ATP-binding positions include E323 and 350–353; that span reads GGDS.

The protein belongs to the phosphoglycerate kinase family. In terms of assembly, monomer.

It is found in the cytoplasm. The enzyme catalyses (2R)-3-phosphoglycerate + ATP = (2R)-3-phospho-glyceroyl phosphate + ADP. It participates in carbohydrate degradation; glycolysis; pyruvate from D-glyceraldehyde 3-phosphate: step 2/5. This chain is Phosphoglycerate kinase, found in Geobacillus sp. (strain WCH70).